Consider the following 485-residue polypeptide: E3 ubiquitin-protein ligase TRIM34A (485 aa).

The RING-type zinc-finger motif lies at 15 to 59; sequence CPVCQELLTKALSLGCGHRVCQACLITKKNAVINPREKSSCPVCG. A B box-type zinc finger spans residues 91 to 132; sequence TKRDLCVHHGEKLLLFCKEDKKAICWVCERSQEHRGHHTFLW. Residues cysteine 96, histidine 99, cysteine 118, and histidine 124 each contribute to the Zn(2+) site. Residues 136–170 adopt a coiled-coil conformation; that stretch reads VRECQENLQKALTRLRKEQEKVETLEADIKEDRLS. The 204-residue stretch at 282–485 folds into the B30.2/SPRY domain; sequence LSGMLQKFRE…APMTLCPLNS (204 aa).

Belongs to the TRIM/RBCC family. In terms of assembly, homotrimer. Interacts (via B-box and SPRY domain) with TRIM5.

It is found in the cytoplasm. It localises to the mitochondrion. It catalyses the reaction S-ubiquitinyl-[E2 ubiquitin-conjugating enzyme]-L-cysteine + [acceptor protein]-L-lysine = [E2 ubiquitin-conjugating enzyme]-L-cysteine + N(6)-ubiquitinyl-[acceptor protein]-L-lysine.. It functions in the pathway protein modification; protein ubiquitination. Its function is as follows. Functions as antiviral protein and contributes to the defense against retroviral infections. Acts as a capsid-specific restriction factor with the help of TRIM5 and prevents infection from non-host-adapted retroviruses. During influenza A virus infection, promotes programmed cell death by targeting ZBP1 for 'Lys-63'-linked polyubiquitination. In turn, promotes ZBP1 recruitment of RIPK3 to mediate virus-induced programmed necrosis. Negatively regulates the function of mitochondria by enhancing mitochondrial depolarization leading to cytochrome c release and mitochondria-dependent apoptosis. Also promotes the formation of multinucleated giant cells by means of cell fusion and phagocytosis in epithelial cells. Plays an essential role in sustaining the integrity of the inner mucus layer in the colon by controlling the exocytosis of the major component of colonic mucus MUC2 from colonic goblet cells. This chain is E3 ubiquitin-protein ligase TRIM34A, found in Mus musculus (Mouse).